We begin with the raw amino-acid sequence, 745 residues long: Receptor-type adenylate cyclase (745 aa).

At 1–341 the chain is on the extracellular side; that stretch reads GELGQTDRFF…NEGALTRAQL (341 aa). N-linked (GlcNAc...) asparagine glycosylation is found at Asn15, Asn50, Asn189, and Asn312. Residues 342–362 form a helical membrane-spanning segment; sequence IGVVVGTIFAVLLLLALGIVL. Topologically, residues 363–745 are cytoplasmic; sequence CVALRNTRDN…GSDEVARTCV (383 aa). The Guanylate cyclase domain occupies 384 to 538; it reads TLIFTDIESS…RTPNLAARTE (155 aa). Positions 389 and 432 each coordinate Mg(2+).

Belongs to the adenylyl cyclase class-3 family. Mg(2+) is required as a cofactor.

The protein resides in the cell membrane. The catalysed reaction is ATP = 3',5'-cyclic AMP + diphosphate. Its function is as follows. Could act as a receptor for an unknown ligand. This chain is Receptor-type adenylate cyclase, found in Trypanosoma congolense.